The sequence spans 165 residues: Peptide deformylase (165 aa).

Residues Cys-88 and His-130 each coordinate Fe cation. Residue Glu-131 is part of the active site. Residue His-134 participates in Fe cation binding.

The protein belongs to the polypeptide deformylase family. Fe(2+) serves as cofactor.

The enzyme catalyses N-terminal N-formyl-L-methionyl-[peptide] + H2O = N-terminal L-methionyl-[peptide] + formate. Its function is as follows. Removes the formyl group from the N-terminal Met of newly synthesized proteins. Requires at least a dipeptide for an efficient rate of reaction. N-terminal L-methionine is a prerequisite for activity but the enzyme has broad specificity at other positions. The sequence is that of Peptide deformylase from Borreliella burgdorferi (strain ATCC 35210 / DSM 4680 / CIP 102532 / B31) (Borrelia burgdorferi).